Here is a 199-residue protein sequence, read N- to C-terminus: Fe/S biogenesis protein NfuA (199 aa).

[4Fe-4S] cluster-binding residues include Cys-151 and Cys-154.

This sequence belongs to the NfuA family. As to quaternary structure, homodimer. [4Fe-4S] cluster is required as a cofactor.

Functionally, involved in iron-sulfur cluster biogenesis. Binds a 4Fe-4S cluster, can transfer this cluster to apoproteins, and thereby intervenes in the maturation of Fe/S proteins. Could also act as a scaffold/chaperone for damaged Fe/S proteins. The polypeptide is Fe/S biogenesis protein NfuA (Xanthomonas oryzae pv. oryzae (strain PXO99A)).